Reading from the N-terminus, the 98-residue chain is Cuticle protein 67, isoform A (98 aa).

6 tandem repeats follow at residues 7 to 10, 15 to 18, 22 to 25, 79 to 82, 86 to 89, and 92 to 95.

In terms of biological role, component of the cuticle of migratory locust which contains more than 100 different structural proteins. The protein is Cuticle protein 67, isoform A of Locusta migratoria (Migratory locust).